The primary structure comprises 151 residues: Sec-independent protein translocase protein TatB (151 aa).

Residues methionine 1–glycine 21 traverse the membrane as a helical segment. 2 stretches are compositionally biased toward basic and acidic residues: residues lysine 87–arginine 99 and glutamate 122–alanine 132. A disordered region spans residues lysine 87–serine 151. Positions alanine 134–serine 151 are enriched in low complexity.

This sequence belongs to the TatB family. As to quaternary structure, the Tat system comprises two distinct complexes: a TatABC complex, containing multiple copies of TatA, TatB and TatC subunits, and a separate TatA complex, containing only TatA subunits. Substrates initially bind to the TatABC complex, which probably triggers association of the separate TatA complex to form the active translocon.

The protein resides in the cell inner membrane. Its function is as follows. Part of the twin-arginine translocation (Tat) system that transports large folded proteins containing a characteristic twin-arginine motif in their signal peptide across membranes. Together with TatC, TatB is part of a receptor directly interacting with Tat signal peptides. TatB may form an oligomeric binding site that transiently accommodates folded Tat precursor proteins before their translocation. The chain is Sec-independent protein translocase protein TatB from Marinobacter nauticus (strain ATCC 700491 / DSM 11845 / VT8) (Marinobacter aquaeolei).